Here is a 339-residue protein sequence, read N- to C-terminus: Lymphocyte-specific protein 1 (339 aa).

Residues 1-198 (MAEASSDPGA…SPPLSPTTKL (198 aa)) form a disordered region. S24 bears the Phosphoserine mark. Composition is skewed to basic and acidic residues over residues 32–43 (VHEQCQHERDRQ) and 51–61 (GGGHVPERPKQ). A Phosphoserine modification is found at S111. Positions 117–140 (EDRPGLHAYEKEDSDEVHLEELSL) are enriched in basic and acidic residues. T175 bears the Phosphothreonine mark. Phosphoserine occurs at positions 177, 188, 189, and 193. Over residues 185–196 (IEQSSPPLSPTT) the composition is skewed to polar residues. S252 is modified (phosphoserine; by MAPKAPK2). The tract at residues 294–315 (KSLWEQKGGSKTSSTIKSTPSG) is disordered. The span at 300–315 (KGGSKTSSTIKSTPSG) shows a compositional bias: low complexity. An N6-acetyllysine modification is found at K327.

Binds actin. Phosphorylated by casein kinase II, protein kinase C and MAPKAPK2. Phosphorylation by PKC induces translocation from membrane to cytoplasm. Phosphorylation by MAPKAPK2 may regulate neutrophil chemotaxis. Activated T-lymphocytes.

It localises to the cell membrane. Its function is as follows. May play a role in mediating neutrophil activation and chemotaxis. In Homo sapiens (Human), this protein is Lymphocyte-specific protein 1 (LSP1).